The sequence spans 389 residues: Putative glutamate--cysteine ligase 2 (389 aa).

The protein belongs to the glutamate--cysteine ligase type 2 family. YbdK subfamily.

It carries out the reaction L-cysteine + L-glutamate + ATP = gamma-L-glutamyl-L-cysteine + ADP + phosphate + H(+). ATP-dependent carboxylate-amine ligase which exhibits weak glutamate--cysteine ligase activity. The protein is Putative glutamate--cysteine ligase 2 of Rhodospirillum rubrum (strain ATCC 11170 / ATH 1.1.1 / DSM 467 / LMG 4362 / NCIMB 8255 / S1).